A 372-amino-acid polypeptide reads, in one-letter code: uncharacterized protein (372 aa).

A helical membrane pass occupies residues 224 to 244 (GSTVGVVIGVVIVIFIGFIII). The residue at position 329 (serine 329) is a Phosphoserine.

It localises to the vacuole membrane. This is an uncharacterized protein from Saccharomyces cerevisiae (strain ATCC 204508 / S288c) (Baker's yeast).